The primary structure comprises 198 residues: GTP cyclohydrolase-2 (198 aa).

52-56 (RMHSE) serves as a coordination point for GTP. Zn(2+)-binding residues include Cys57, Cys68, and Cys70. GTP contacts are provided by residues Gln73, 94–96 (EGR), and Thr116. Asp128 acts as the Proton acceptor in catalysis. Residue Arg130 is the Nucleophile of the active site. GTP contacts are provided by Thr151 and Lys156.

Belongs to the GTP cyclohydrolase II family. It depends on Zn(2+) as a cofactor.

The enzyme catalyses GTP + 4 H2O = 2,5-diamino-6-hydroxy-4-(5-phosphoribosylamino)-pyrimidine + formate + 2 phosphate + 3 H(+). Its pathway is cofactor biosynthesis; riboflavin biosynthesis; 5-amino-6-(D-ribitylamino)uracil from GTP: step 1/4. Catalyzes the conversion of GTP to 2,5-diamino-6-ribosylamino-4(3H)-pyrimidinone 5'-phosphate (DARP), formate and pyrophosphate. The protein is GTP cyclohydrolase-2 of Vibrio vulnificus (strain CMCP6).